The following is a 217-amino-acid chain: Probable transaldolase (217 aa).

The Schiff-base intermediate with substrate role is filled by K83.

Belongs to the transaldolase family. Type 3B subfamily.

The protein localises to the cytoplasm. The enzyme catalyses D-sedoheptulose 7-phosphate + D-glyceraldehyde 3-phosphate = D-erythrose 4-phosphate + beta-D-fructose 6-phosphate. The protein operates within carbohydrate degradation; pentose phosphate pathway; D-glyceraldehyde 3-phosphate and beta-D-fructose 6-phosphate from D-ribose 5-phosphate and D-xylulose 5-phosphate (non-oxidative stage): step 2/3. In terms of biological role, transaldolase is important for the balance of metabolites in the pentose-phosphate pathway. This is Probable transaldolase from Maricaulis maris (strain MCS10) (Caulobacter maris).